The sequence spans 289 residues: Aquaporin PIP2-3 (289 aa).

The disordered stretch occupies residues 1-25 (MAKQDIEASGPEAGEFSAKDYTDPP). 2 consecutive transmembrane segments (helical) span residues 43–63 (AVIA…ATVI) and 80–100 (CGGV…FILV). An NPA 1 motif is present at residues 112–114 (NPA). 3 consecutive transmembrane segments (helical) span residues 131–151 (LLYI…VKGF), 173–193 (GTGL…VFSA), and 207–227 (VLAP…TIPI). Positions 233 to 235 (NPA) match the NPA 2 motif. The helical transmembrane segment at 255-275 (IFWVGPLIGAAIAAAYHQYVL) threads the bilayer.

The protein belongs to the MIP/aquaporin (TC 1.A.8) family. PIP (TC 1.A.8.11) subfamily.

The protein localises to the cell membrane. Functionally, aquaporins facilitate the transport of water and small neutral solutes across cell membranes. The sequence is that of Aquaporin PIP2-3 (PIP2-3) from Zea mays (Maize).